The primary structure comprises 474 residues: DNA-binding protein (474 aa).

The disordered stretch occupies residues Met1–Lys34. Tyr142 is modified (phosphotyrosine; by host). Positions 231 and 233 each coordinate Zn(2+). The flexible loop stretch occupies residues Val244–Ile278. Zn(2+) contacts are provided by Cys286, Cys302, Cys343, Cys345, Cys397, and Cys413. The interval Val460–Phe474 is C-terminal arm, DBP binding.

Belongs to the adenoviridae E2A DNA-binding protein family. In terms of assembly, homomultimerizes on viral ssDNA bound to pTP. Forms a initiation complex with viral polymerase, pTP and hosts NFIA and POU2F1/OCT1. Interacts with host SRCAP.

The protein localises to the host nucleus. Functionally, plays a role in the elongation phase of viral strand displacement replication by unwinding the template in an ATP-independent fashion, employing its capacity to form multimers. Also enhances the rate of initiation. Released from template upon second strand synthesis. Assembles in complex with viral pTP, viral pol, host NFIA and host POU2F1/OCT1 on viral origin of replication. Covers the whole ssDNA genome during synthesis. The complementary strand synthesis induces its relese from DNA template. May inhibit cellular transcription mediated by the interaction between host SRCAP and CBP. The polypeptide is DNA-binding protein (Homo sapiens (Human)).